The sequence spans 624 residues: Chitin elicitor receptor kinase 1 (624 aa).

The N-terminal stretch at M1–A18 is a signal peptide. Residues A19–A240 are Extracellular-facing. Intrachain disulfides connect C30–C93, C34–C160, and C91–C158. N48 carries N-linked (GlcNAc...) asparagine glycosylation. R115–S121 provides a ligand contact to chitin. The N-linked (GlcNAc...) asparagine glycan is linked to N128. Chitin is bound at residue P142–D148. 2 N-linked (GlcNAc...) asparagine glycosylation sites follow: N153 and N157. The LysM domain maps to L173–P218. The N-linked (GlcNAc...) asparagine glycan is linked to N223. A helical membrane pass occupies residues I241 to F261. The Cytoplasmic portion of the chain corresponds to Y262–R624. Residues F324 to L599 enclose the Protein kinase domain. ATP contacts are provided by residues I330–V338 and K351. The active-site Proton acceptor is the D443.

This sequence belongs to the protein kinase superfamily. Ser/Thr protein kinase family. As to quaternary structure, homooligomer. Interacts with CEBIP. Interacts with LYP4 and LYP6. Interacts with RLCK176. In terms of processing, autophosphorylated; induced by chitin and derivatives. As to expression, expressed in seedlings, roots, shoots and stems, and, to a lower extent, in flowers.

Its subcellular location is the cell membrane. It catalyses the reaction L-seryl-[protein] + ATP = O-phospho-L-seryl-[protein] + ADP + H(+). The catalysed reaction is L-threonyl-[protein] + ATP = O-phospho-L-threonyl-[protein] + ADP + H(+). Lysin motif (LysM) receptor kinase required as a cell surface receptor for chitin elicitor (chitooligosaccharides) signaling leading to innate immunity in response to biotic stresses. Involved in the resistance to pathogenic fungi, probably by sensing microbe-associated molecular patterns (MAMP) and pathogen-associated molecular patterns (PAMP). Involved in the detection of microbial peptidoglycans (PGNs) and mediates PGN response. Plays dual roles in PGN and chitin signaling during innate immunity. Acts as an adapter for LYP4 and LYP6 and mediates signal transduction from the extracellular to intracellular spaces. Participates in the activation of defense genes during response to PGN and chitin. Phosphorylates the downstream partner RLCK185 in response to chitin elicitation. In Oryza sativa subsp. japonica (Rice), this protein is Chitin elicitor receptor kinase 1.